Reading from the N-terminus, the 22-residue chain is Phospholipase A2 (22 aa).

Belongs to the phospholipase A2 family. Requires Ca(2+) as cofactor.

The protein resides in the secreted. It catalyses the reaction a 1,2-diacyl-sn-glycero-3-phosphocholine + H2O = a 1-acyl-sn-glycero-3-phosphocholine + a fatty acid + H(+). Functionally, PA2 catalyzes the calcium-dependent hydrolysis of the 2-acyl groups in 3-sn-phosphoglycerides. The sequence is that of Phospholipase A2 from Struthio camelus (Common ostrich).